The chain runs to 732 residues: Catalase-peroxidase (732 aa).

The segment at 1–29 (MTTESKCPFSGGGKPNTPRRGPSNQDWWP) is disordered. The tryptophyl-tyrosyl-methioninium (Trp-Tyr) (with M-249) cross-link spans 96 to 223 (WHSAGTYRIG…LAAVQMGLIY (128 aa)). Residue histidine 97 is the Proton acceptor of the active site. Residues 223-249 (YVNPEGPDGNPDPVAAARDIRETFARM) constitute a cross-link (tryptophyl-tyrosyl-methioninium (Tyr-Met) (with W-96)). Heme b is bound at residue histidine 264.

Belongs to the peroxidase family. Peroxidase/catalase subfamily. In terms of assembly, homodimer or homotetramer. It depends on heme b as a cofactor. Post-translationally, formation of the three residue Trp-Tyr-Met cross-link is important for the catalase, but not the peroxidase activity of the enzyme.

The enzyme catalyses H2O2 + AH2 = A + 2 H2O. It carries out the reaction 2 H2O2 = O2 + 2 H2O. Functionally, bifunctional enzyme with both catalase and broad-spectrum peroxidase activity. This Serratia proteamaculans (strain 568) protein is Catalase-peroxidase.